The chain runs to 201 residues: dTTP/UTP pyrophosphatase (201 aa).

Asp-81 acts as the Proton acceptor in catalysis.

It belongs to the Maf family. YhdE subfamily. It depends on a divalent metal cation as a cofactor.

It is found in the cytoplasm. The enzyme catalyses dTTP + H2O = dTMP + diphosphate + H(+). The catalysed reaction is UTP + H2O = UMP + diphosphate + H(+). Nucleoside triphosphate pyrophosphatase that hydrolyzes dTTP and UTP. May have a dual role in cell division arrest and in preventing the incorporation of modified nucleotides into cellular nucleic acids. This Dechloromonas aromatica (strain RCB) protein is dTTP/UTP pyrophosphatase.